A 250-amino-acid chain; its full sequence is 1-(5-phosphoribosyl)-5-[(5-phosphoribosylamino)methylideneamino] imidazole-4-carboxamide isomerase (250 aa).

The Proton acceptor role is filled by aspartate 8. Aspartate 131 acts as the Proton donor in catalysis.

Belongs to the HisA/HisF family.

Its subcellular location is the cytoplasm. It carries out the reaction 1-(5-phospho-beta-D-ribosyl)-5-[(5-phospho-beta-D-ribosylamino)methylideneamino]imidazole-4-carboxamide = 5-[(5-phospho-1-deoxy-D-ribulos-1-ylimino)methylamino]-1-(5-phospho-beta-D-ribosyl)imidazole-4-carboxamide. The protein operates within amino-acid biosynthesis; L-histidine biosynthesis; L-histidine from 5-phospho-alpha-D-ribose 1-diphosphate: step 4/9. This chain is 1-(5-phosphoribosyl)-5-[(5-phosphoribosylamino)methylideneamino] imidazole-4-carboxamide isomerase, found in Paraburkholderia phymatum (strain DSM 17167 / CIP 108236 / LMG 21445 / STM815) (Burkholderia phymatum).